Here is a 283-residue protein sequence, read N- to C-terminus: 4-diphosphocytidyl-2-C-methyl-D-erythritol kinase (283 aa).

Residue Lys-10 is part of the active site. An ATP-binding site is contributed by 99-109 (PMGGGLGGGSS). Residue Asp-141 is part of the active site.

This sequence belongs to the GHMP kinase family. IspE subfamily. Homodimer.

It catalyses the reaction 4-CDP-2-C-methyl-D-erythritol + ATP = 4-CDP-2-C-methyl-D-erythritol 2-phosphate + ADP + H(+). Its pathway is isoprenoid biosynthesis; isopentenyl diphosphate biosynthesis via DXP pathway; isopentenyl diphosphate from 1-deoxy-D-xylulose 5-phosphate: step 3/6. Its function is as follows. Catalyzes the phosphorylation of the position 2 hydroxy group of 4-diphosphocytidyl-2C-methyl-D-erythritol. In Salmonella paratyphi C (strain RKS4594), this protein is 4-diphosphocytidyl-2-C-methyl-D-erythritol kinase.